Here is a 348-residue protein sequence, read N- to C-terminus: NADH-quinone oxidoreductase subunit H (348 aa).

The next 8 membrane-spanning stretches (helical) occupy residues 10-30 (LPFL…LVLV), 82-102 (GVFL…WAVI), 115-135 (VGLL…IMGG), 161-181 (IGFV…TTIV), 199-219 (FLDW…ISAL), 251-271 (LFFL…TILF), 287-307 (IPGV…FAIV), and 322-342 (LGWK…AAFL).

It belongs to the complex I subunit 1 family. NDH-1 is composed of 14 different subunits. Subunits NuoA, H, J, K, L, M, N constitute the membrane sector of the complex.

The protein resides in the cell inner membrane. It catalyses the reaction a quinone + NADH + 5 H(+)(in) = a quinol + NAD(+) + 4 H(+)(out). Functionally, NDH-1 shuttles electrons from NADH, via FMN and iron-sulfur (Fe-S) centers, to quinones in the respiratory chain. The immediate electron acceptor for the enzyme in this species is believed to be ubiquinone. Couples the redox reaction to proton translocation (for every two electrons transferred, four hydrogen ions are translocated across the cytoplasmic membrane), and thus conserves the redox energy in a proton gradient. This subunit may bind ubiquinone. The chain is NADH-quinone oxidoreductase subunit H from Bartonella tribocorum (strain CIP 105476 / IBS 506).